The following is a 109-amino-acid chain: SKSASIVMLTELVERGQAKCAQYWPNDGILTFGDIEVEFLSVNESEDYSERDFKVSNRSDNNGSQLIVKQFHYHGWPEVGAPVSGYSMIELVEDVQKQQQNSGNHPIVI.

The Tyrosine-protein phosphatase domain maps to 1–109 (SKSASIVMLT…QNSGNHPIVI (109 aa)). Glutamate 78 serves as a coordination point for substrate.

It belongs to the protein-tyrosine phosphatase family.

It catalyses the reaction O-phospho-L-tyrosyl-[protein] + H2O = L-tyrosyl-[protein] + phosphate. The sequence is that of Tyrosine-protein phosphatase 4 (STY-4) from Styela plicata (Wrinkled sea squirt).